The primary structure comprises 242 residues: Pyridoxine 5'-phosphate synthase (242 aa).

N6 provides a ligand contact to 3-amino-2-oxopropyl phosphate. 8–9 (DH) is a 1-deoxy-D-xylulose 5-phosphate binding site. A 3-amino-2-oxopropyl phosphate-binding site is contributed by R17. The Proton acceptor role is filled by H42. Residues R44 and H49 each contribute to the 1-deoxy-D-xylulose 5-phosphate site. Residue E69 is the Proton acceptor of the active site. T99 serves as a coordination point for 1-deoxy-D-xylulose 5-phosphate. The Proton donor role is filled by H193. 3-amino-2-oxopropyl phosphate-binding positions include G194 and 217–218 (GH).

It belongs to the PNP synthase family. As to quaternary structure, homooctamer; tetramer of dimers.

Its subcellular location is the cytoplasm. It catalyses the reaction 3-amino-2-oxopropyl phosphate + 1-deoxy-D-xylulose 5-phosphate = pyridoxine 5'-phosphate + phosphate + 2 H2O + H(+). It participates in cofactor biosynthesis; pyridoxine 5'-phosphate biosynthesis; pyridoxine 5'-phosphate from D-erythrose 4-phosphate: step 5/5. In terms of biological role, catalyzes the complicated ring closure reaction between the two acyclic compounds 1-deoxy-D-xylulose-5-phosphate (DXP) and 3-amino-2-oxopropyl phosphate (1-amino-acetone-3-phosphate or AAP) to form pyridoxine 5'-phosphate (PNP) and inorganic phosphate. This is Pyridoxine 5'-phosphate synthase from Aquifex aeolicus (strain VF5).